We begin with the raw amino-acid sequence, 172 residues long: L-methionine sulfoximine/L-methionine sulfone acetyltransferase (172 aa).

One can recognise an N-acetyltransferase domain in the interval 3 to 166; that stretch reads ASIRDAGVAD…DLTFMQLNLD (164 aa). Residues 75–77 and 85–87 each bind substrate; these read RPF and EHS. Residues 88-90, 96-101, and Asn127 each bind acetyl-CoA; these read VYV and GKGLGV.

In terms of assembly, homodimer.

The enzyme catalyses L-methionine sulfoximine + acetyl-CoA = N-acetyl-L-methionine sulfoximine + CoA + H(+). It carries out the reaction L-methionine sulfone + acetyl-CoA = N-acetyl-L-methionine sulfone + CoA + H(+). In terms of biological role, plays a role in the resistance against the toxic effects of L-methionine sulfoximine (MSX), a rare amino acid, which inhibits glutamine synthetase (GlnA). Catalyzes the acetylation of L-methionine sulfoximine (MSX). It can also use L-methionine sulfone (MSO). This is L-methionine sulfoximine/L-methionine sulfone acetyltransferase from Pseudomonas paraeruginosa (strain DSM 24068 / PA7) (Pseudomonas aeruginosa (strain PA7)).